A 52-amino-acid polypeptide reads, in one-letter code: MPPAQLQHRSIRHRQHKTFAIAEQQSPQLQQQQQSFLGGGGPCCMYIGCGCG.

This is an uncharacterized protein from Saccharomyces cerevisiae (strain ATCC 204508 / S288c) (Baker's yeast).